We begin with the raw amino-acid sequence, 168 residues long: Ribosome rescue factor SmrB (168 aa).

The Smr domain maps to 92-167 (LDLHGLTKEQ…GDAAILILFE (76 aa)).

It belongs to the SmrB family. As to quaternary structure, associates with collided ribosomes, but not with correctly translating polysomes.

Its function is as follows. Acts as a ribosome collision sensor. Detects stalled/collided disomes (pairs of ribosomes where the leading ribosome is stalled and a second ribosome has collided with it) and endonucleolytically cleaves mRNA at the 5' boundary of the stalled ribosome. Stalled/collided disomes form a new interface (primarily via the 30S subunits) that binds SmrB. Cleaved mRNA becomes available for tmRNA ligation, leading to ribosomal subunit dissociation and rescue of stalled ribosomes. The polypeptide is Ribosome rescue factor SmrB (Pasteurella multocida (strain Pm70)).